A 286-amino-acid polypeptide reads, in one-letter code: Beta-lactamase TEM-12 (286 aa).

An N-terminal signal peptide occupies residues 1 to 23 (MSIQHFRVALIPFFAAFCLPVFA). Residue S68 is the Acyl-ester intermediate of the active site. A disulfide bond links C75 and C121. E166 functions as the Proton acceptor in the catalytic mechanism. A substrate-binding site is contributed by 232–234 (KSG).

Belongs to the class-A beta-lactamase family.

The catalysed reaction is a beta-lactam + H2O = a substituted beta-amino acid. TEM-type are the most prevalent beta-lactamases in enterobacteria; they hydrolyze the beta-lactam bond in susceptible beta-lactam antibiotics, thus conferring resistance to penicillins and cephalosporins such as ceftazidime. The sequence is that of Beta-lactamase TEM-12 (blaT-12b) from Klebsiella oxytoca.